The sequence spans 275 residues: Pyridoxal phosphate homeostasis protein (275 aa).

At serine 6 the chain carries Phosphoserine. The residue at position 47 (lysine 47) is an N6-(pyridoxal phosphate)lysine. Tyrosine 69 bears the Phosphotyrosine mark. An N6-succinyllysine modification is found at lysine 125. A phosphoserine mark is found at serine 226 and serine 244. The span at 251–263 (DYSKKPTPDKCAA) shows a compositional bias: basic and acidic residues. The tract at residues 251–275 (DYSKKPTPDKCAADVKAPLEVAQEH) is disordered.

It belongs to the pyridoxal phosphate-binding protein YggS/PROSC family. Ubiquitous.

In terms of biological role, pyridoxal 5'-phosphate (PLP)-binding protein, which may be involved in intracellular homeostatic regulation of pyridoxal 5'-phosphate (PLP), the active form of vitamin B6. The polypeptide is Pyridoxal phosphate homeostasis protein (Homo sapiens (Human)).